Here is a 453-residue protein sequence, read N- to C-terminus: Major fimbrium subunit FimC (453 aa).

A signal peptide spans Met1–Ala28. The N-palmitoyl cysteine moiety is linked to residue Cys29. Cys29 carries the S-diacylglycerol cysteine lipid modification. The propeptide occupies Cys29–Arg56.

Belongs to the bacteroidetes fimbrillin superfamily. FimA/Mfa1 family. In terms of assembly, fimbriae are composed of a major, structural subunit and the minor components FimC, FimD and FimE. Identified in a complex composed of FimC, FimD and FimE (in vitro). The complex interacts with host extracellular matrix proteins, including fibronectin and type I collagen. Interacts with host CXCR4.

The protein resides in the fimbrium. The protein localises to the cell outer membrane. Minor component of fimbriae. These long, filamentous pili are attached to the cell surface; they mediate biofilm formation, adhesion onto host cells and onto other bacteria that are part of the oral microbiome. They play an important role in invasion of periodontal tissues and are major virulence factors. FimC, FimD and FimE contribute to interaction with host CXCR4 and thereby down-regulate the TLR2-mediated host immune response. The sequence is that of Major fimbrium subunit FimC from Porphyromonas gingivalis (strain ATCC 33277 / DSM 20709 / CIP 103683 / JCM 12257 / NCTC 11834 / 2561).